We begin with the raw amino-acid sequence, 129 residues long: Small ribosomal subunit protein uS9 (129 aa).

This sequence belongs to the universal ribosomal protein uS9 family.

The chain is Small ribosomal subunit protein uS9 from Helicobacter pylori (strain P12).